The chain runs to 432 residues: Probable anion transporter 5 (432 aa).

The first 23 residues, 1–23, serve as a signal peptide directing secretion; the sequence is MKLSNIPQRYVIVFLTFLSTCVC. The next 11 helical transmembrane spans lie at 50-70, 78-98, 101-121, 140-160, 164-184, 229-249, 273-293, 305-325, 331-351, 360-380, and 405-425; these read TILS…GWAA, VLLL…LDPN, GLLV…FPSI, ITTS…PALV, GPES…LLWI, LPVW…YVLM, VPYL…DYLI, KFLN…LPMF, VILC…GFAV, YAGI…IIGV, and VVFF…LLFS.

This sequence belongs to the major facilitator superfamily. Sodium/anion cotransporter (TC 2.A.1.14) family. In terms of tissue distribution, ubiquitous.

It is found in the golgi apparatus membrane. Functionally, inorganic phosphate and probable anion transporter. This chain is Probable anion transporter 5 (ANTR5), found in Arabidopsis thaliana (Mouse-ear cress).